We begin with the raw amino-acid sequence, 209 residues long: Thymidine kinase (209 aa).

ATP-binding positions include 9-16 (SAMNAGKT) and 88-91 (DEAQ). The active-site Proton acceptor is the E89.

This sequence belongs to the thymidine kinase family. In terms of assembly, homotetramer.

The protein localises to the cytoplasm. It catalyses the reaction thymidine + ATP = dTMP + ADP + H(+). This Xanthomonas axonopodis pv. citri (strain 306) protein is Thymidine kinase.